A 338-amino-acid polypeptide reads, in one-letter code: Glycerol-3-phosphate dehydrogenase [NAD(P)+] (338 aa).

NADPH contacts are provided by S18, Y19, H39, and K113. Residues K113, G142, and T144 each contribute to the sn-glycerol 3-phosphate site. NADPH is bound at residue A146. Positions 198, 251, 261, 262, and 263 each coordinate sn-glycerol 3-phosphate. The active-site Proton acceptor is K198. Position 262 (R262) interacts with NADPH. The NADPH site is built by V286 and E288.

It belongs to the NAD-dependent glycerol-3-phosphate dehydrogenase family.

The protein localises to the cytoplasm. It catalyses the reaction sn-glycerol 3-phosphate + NAD(+) = dihydroxyacetone phosphate + NADH + H(+). It carries out the reaction sn-glycerol 3-phosphate + NADP(+) = dihydroxyacetone phosphate + NADPH + H(+). It participates in membrane lipid metabolism; glycerophospholipid metabolism. Catalyzes the reduction of the glycolytic intermediate dihydroxyacetone phosphate (DHAP) to sn-glycerol 3-phosphate (G3P), the key precursor for phospholipid synthesis. In Photobacterium profundum (strain SS9), this protein is Glycerol-3-phosphate dehydrogenase [NAD(P)+].